A 321-amino-acid chain; its full sequence is uncharacterized protein (321 aa).

This sequence belongs to the carbohydrate kinase PfkB family.

This is an uncharacterized protein from Escherichia coli (strain K12).